We begin with the raw amino-acid sequence, 265 residues long: Exosome complex component Rrp4 (265 aa).

Residues 65–137 (GDNVIGKIVD…EVNNIDLTTK (73 aa)) enclose the S1 motif domain. In terms of domain architecture, KH spans 147-205 (KGGQIVKITPSRVPRVIGRGGSMINMIKKLTMTRIIVGQNGWIWVNGKNEALEKLAIEA). Over residues 241–254 (EIPELEEEPQEETE) the composition is skewed to acidic residues. Residues 241-265 (EIPELEEEPQEETEVNNNDGETRRT) are disordered.

The protein belongs to the RRP4 family. In terms of assembly, component of the archaeal exosome complex. Forms a trimer of Rrp4 and/or Csl4 subunits. The trimer associates with a hexameric ring-like arrangement composed of 3 Rrp41-Rrp42 heterodimers.

It is found in the cytoplasm. Functionally, non-catalytic component of the exosome, which is a complex involved in RNA degradation. Increases the RNA binding and the efficiency of RNA degradation. Confers strong poly(A) specificity to the exosome. In Pyrococcus horikoshii (strain ATCC 700860 / DSM 12428 / JCM 9974 / NBRC 100139 / OT-3), this protein is Exosome complex component Rrp4.